The primary structure comprises 221 residues: Lipoprotein-releasing system ATP-binding protein LolD (221 aa).

Residues 6-220 enclose the ABC transporter domain; sequence LILKNISKHY…YKLKHRLLNI (215 aa). 42–49 is a binding site for ATP; it reads GSSGSGKS.

It belongs to the ABC transporter superfamily. Lipoprotein translocase (TC 3.A.1.125) family. As to quaternary structure, the complex is composed of two ATP-binding proteins (LolD) and two transmembrane proteins (LolC and LolE).

The protein resides in the cell inner membrane. Part of the ABC transporter complex LolCDE involved in the translocation of mature outer membrane-directed lipoproteins, from the inner membrane to the periplasmic chaperone, LolA. Responsible for the formation of the LolA-lipoprotein complex in an ATP-dependent manner. This is Lipoprotein-releasing system ATP-binding protein LolD from Rickettsia conorii (strain ATCC VR-613 / Malish 7).